The chain runs to 256 residues: Imidazole glycerol phosphate synthase subunit hisF1 (256 aa).

Catalysis depends on residues Asp12 and Asp131.

The protein belongs to the HisA/HisF family. As to quaternary structure, heterodimer of HisH and HisF.

The protein resides in the cytoplasm. The enzyme catalyses 5-[(5-phospho-1-deoxy-D-ribulos-1-ylimino)methylamino]-1-(5-phospho-beta-D-ribosyl)imidazole-4-carboxamide + L-glutamine = D-erythro-1-(imidazol-4-yl)glycerol 3-phosphate + 5-amino-1-(5-phospho-beta-D-ribosyl)imidazole-4-carboxamide + L-glutamate + H(+). The protein operates within amino-acid biosynthesis; L-histidine biosynthesis; L-histidine from 5-phospho-alpha-D-ribose 1-diphosphate: step 5/9. In terms of biological role, IGPS catalyzes the conversion of PRFAR and glutamine to IGP, AICAR and glutamate. The HisF subunit catalyzes the cyclization activity that produces IGP and AICAR from PRFAR using the ammonia provided by the HisH subunit. The chain is Imidazole glycerol phosphate synthase subunit hisF1 (hisF1) from Pseudomonas aeruginosa (strain ATCC 15692 / DSM 22644 / CIP 104116 / JCM 14847 / LMG 12228 / 1C / PRS 101 / PAO1).